The chain runs to 552 residues: Capsid protein precursor (552 aa).

Positions 1–41 (MKQNDTKKTTQRRNSKKYSSKTNRGTKRAPRDQEVGTGAQE) are disordered. Over residues 9 to 28 (TTQRRNSKKYSSKTNRGTKR) the composition is skewed to basic residues.

As to quaternary structure, homodimer. Post-translationally, the 7 kDa polypeptide is acetylated. Autocatalytic proteolysis releases a post-translationally modified peptide that remains associated with nucleic acid within the virion. This peptide is observed only when nucleic acid is packaged in the capsid.

The protein localises to the virion. Its function is as follows. The capsid protein self-assembles to form an icosahedral capsid with a T=2 symmetry made of 120 subunits. This Human picobirnavirus (strain Human/Thailand/Hy005102/-) (PBV) protein is Capsid protein precursor (Segment-1).